Reading from the N-terminus, the 467-residue chain is Ribulose bisphosphate carboxylase large chain (467 aa).

An N6,N6,N6-trimethyllysine modification is found at K6. Substrate is bound by residues N115 and T165. K167 (proton acceptor) is an active-site residue. K169 provides a ligand contact to substrate. Mg(2+) contacts are provided by K193, D195, and E196. K193 is subject to N6-carboxylysine. Residue H286 is the Proton acceptor of the active site. R287, H319, and S371 together coordinate substrate.

Belongs to the RuBisCO large chain family. Type I subfamily. As to quaternary structure, heterohexadecamer of 8 large chains and 8 small chains; disulfide-linked. The disulfide link is formed within the large subunit homodimers. It depends on Mg(2+) as a cofactor. Post-translationally, the disulfide bond which can form in the large chain dimeric partners within the hexadecamer appears to be associated with oxidative stress and protein turnover.

It is found in the plastid. It localises to the chloroplast. The enzyme catalyses 2 (2R)-3-phosphoglycerate + 2 H(+) = D-ribulose 1,5-bisphosphate + CO2 + H2O. It catalyses the reaction D-ribulose 1,5-bisphosphate + O2 = 2-phosphoglycolate + (2R)-3-phosphoglycerate + 2 H(+). In terms of biological role, ruBisCO catalyzes two reactions: the carboxylation of D-ribulose 1,5-bisphosphate, the primary event in carbon dioxide fixation, as well as the oxidative fragmentation of the pentose substrate in the photorespiration process. Both reactions occur simultaneously and in competition at the same active site. The sequence is that of Ribulose bisphosphate carboxylase large chain from Cedrus atlantica (Atlas cedar).